Consider the following 320-residue polypeptide: Malate dehydrogenase (320 aa).

NAD(+) contacts are provided by residues 10–15 and Asp34; that span reads GAGNIG. Substrate is bound by residues Arg83 and Arg89. Residues Asn96 and 119–121 contribute to the NAD(+) site; that span reads ITN. Substrate is bound by residues Asn121 and Arg152. Catalysis depends on His176, which acts as the Proton acceptor.

This sequence belongs to the LDH/MDH superfamily. MDH type 3 family.

The catalysed reaction is (S)-malate + NAD(+) = oxaloacetate + NADH + H(+). Functionally, catalyzes the reversible oxidation of malate to oxaloacetate. This is Malate dehydrogenase from Rhizorhabdus wittichii (strain DSM 6014 / CCUG 31198 / JCM 15750 / NBRC 105917 / EY 4224 / RW1) (Sphingomonas wittichii).